We begin with the raw amino-acid sequence, 81 residues long: Large ribosomal subunit protein bL31B (81 aa).

Belongs to the bacterial ribosomal protein bL31 family. Type B subfamily. As to quaternary structure, part of the 50S ribosomal subunit.

The protein is Large ribosomal subunit protein bL31B of Bacillus licheniformis (strain ATCC 14580 / DSM 13 / JCM 2505 / CCUG 7422 / NBRC 12200 / NCIMB 9375 / NCTC 10341 / NRRL NRS-1264 / Gibson 46).